A 257-amino-acid chain; its full sequence is Neurotrophin-3 (257 aa).

Residues 1-18 form the signal peptide; the sequence is MSILFYVIFLAYLRGIQS. Residues 19–138 constitute a propeptide that is removed on maturation; the sequence is TNMDQRSLPE…VLNRTSRRKR (120 aa). Asparagine 131 is a glycosylation site (N-linked (GlcNAc...) asparagine). Disulfide bonds link cysteine 152–cysteine 217, cysteine 195–cysteine 246, and cysteine 205–cysteine 248.

It belongs to the NGF-beta family. As to expression, in the embryo, the expression peak at E4.5 and decreases at later stages of development.

It is found in the secreted. Its function is as follows. Seems to promote the survival of visceral and proprioceptive sensory neurons. The protein is Neurotrophin-3 (NTF3) of Gallus gallus (Chicken).